Consider the following 255-residue polypeptide: Ribosomal RNA small subunit methyltransferase G (255 aa).

The segment at 1-44 is disordered; it reads MSSPGRPKGEYRSAQHAGAVAGPPGRPDGEHRGSSGADPNGRLR. Residues glycine 118, leucine 123, 169–170, and arginine 183 contribute to the S-adenosyl-L-methionine site; that span reads VE.

It belongs to the methyltransferase superfamily. RNA methyltransferase RsmG family.

It is found in the cytoplasm. The enzyme catalyses guanosine(527) in 16S rRNA + S-adenosyl-L-methionine = N(7)-methylguanosine(527) in 16S rRNA + S-adenosyl-L-homocysteine. Its function is as follows. Specifically methylates the N7 position of guanine in position 527 of 16S rRNA. The chain is Ribosomal RNA small subunit methyltransferase G from Bordetella petrii (strain ATCC BAA-461 / DSM 12804 / CCUG 43448).